Here is a 494-residue protein sequence, read N- to C-terminus: V-type proton ATPase subunit B (494 aa).

Arg384 is an ATP binding site.

It belongs to the ATPase alpha/beta chains family. V-ATPase is a heteromultimeric enzyme made up of two complexes: the ATP-hydrolytic V1 complex and the proton translocation V0 complex. The V1 complex consists of three catalytic AB heterodimers that form a heterohexamer, three peripheral stalks each consisting of EG heterodimers, one central rotor including subunits D and F, and the regulatory subunits C and H. The proton translocation complex V0 consists of the proton transport subunit a, a ring of proteolipid subunits c9c'', rotary subunit d, subunits e and f, and the accessory subunits VhaAC45 and ATP6AP2.

In terms of biological role, non-catalytic subunit of the V1 complex of vacuolar(H+)-ATPase (V-ATPase), a multisubunit enzyme composed of a peripheral complex (V1) that hydrolyzes ATP and a membrane integral complex (V0) that translocates protons. V-ATPase is responsible for acidifying and maintaining the pH of intracellular compartments and in some cell types, is targeted to the plasma membrane, where it is responsible for acidifying the extracellular environment. Essential for the proper assembly and activity of V-ATPase. In Heliothis virescens (Tobacco budworm moth), this protein is V-type proton ATPase subunit B (VHA55).